The following is a 1164-amino-acid chain: Avirulence protein AvrBs3 (1164 aa).

Disordered stretches follow at residues 1–68 and 128–152; these read MDPI…SAGS and ARPP…PAAQ. The span at 131-141 shows a compositional bias: basic residues; that stretch reads PRAKPAPRRRA. A compositionally biased stretch (low complexity) spans 142 to 151; sequence AQPSDASPAA. A Cryptic repeat -1 repeat occupies 225 to 254; it reads IVGVGKQWSGARALEALLTVAGELRGPPLQ. A Cryptic repeat 0 repeat occupies 255–288; it reads LDTGQLLKIAKRGGVTAVEAVHAWRNALTGAPLN. Core repeat repeat units lie at residues 289 to 322, 323 to 356, 357 to 390, 391 to 424, 425 to 458, 459 to 492, 493 to 526, 527 to 560, 561 to 594, 595 to 628, 629 to 662, 663 to 696, 697 to 730, 731 to 764, 765 to 798, 799 to 832, and 833 to 866; these read LTPE…QAHG and LTPQ…QAHG. The Core repeat 17.5 repeat unit spans residues 867–886; the sequence is LTPQQVVAIASNGGGRPALE. A Nuclear localization signal NLS1 motif is present at residues 1021–1024; that stretch reads KRAK. Basic and acidic residues predominate over residues 1048–1060; the sequence is DLDAPSPMHEGDQ. A disordered region spans residues 1048-1091; it reads DLDAPSPMHEGDQTRASSRKRSRSDRAVTGPSAQQSFEVRVPEQ. Residues 1067–1070 carry the Nuclear localization signal NLS2 motif; it reads KRSR. The short motif at 1104–1107 is the Nuclear localization signal NLS3 element; it reads KRPR. Residues 1135–1164 are acidic activation domain AAD; it reads QDEDPFAGAADDFPAFNEEELAWLMELLPQ.

The protein belongs to the transcription activator-like effector (TALE) family. Forms a homodimer in the plant cell cytoplasm, prior to nuclear import. Interacts with the plant cell importin alpha-1 (Caimp alpha-1) and importin alpha-2 (Caimp alpha-2) via the nuclear localization signal NLS2, but not via NLS3.

It localises to the secreted. Its subcellular location is the host nucleus. Functionally, avirulence protein. Acts as a transcription factor in C.annuum plants. In susceptible plants lacking the Bs3 resistance gene induces expression of a number of genes, including genes homologous to a family of auxin-induced genes, alpha-expansin genes, pectate lyase, anthocyanidin glucoside rhamnosyl transferase and at least one transcription factor, UPA20. Their expression leads to plant hypertrophy in mesophyll cells, probably mainly mediated by UPA20. In resistant plants induces the hypersensitive response (HR), by inducing transcription of plant Bs3 which induces HR; a mutated AvrBs3 missing repeats 11-14 does not induce expression of Bs3 but does induce Bs3-E, a Bs3 allele with a modified promoter. Binds DNA corresponding to the upa-box in sequence-specific manner. This is Avirulence protein AvrBs3 (avrBs3) from Xanthomonas euvesicatoria.